A 435-amino-acid polypeptide reads, in one-letter code: GTPase Der (435 aa).

EngA-type G domains follow at residues 4–167 (GIVA…PSHE) and 175–350 (TRVS…TALD). GTP contacts are provided by residues 10–17 (GRPNVGKS), 57–61 (DTGGI), 119–122 (NKYD), 181–188 (GRPNVGKS), 228–232 (DTAGI), and 293–296 (NKWD). A KH-like domain is found at 351-435 (KKIKTSVFNE…PMSIIFRERK (85 aa)).

The protein belongs to the TRAFAC class TrmE-Era-EngA-EngB-Septin-like GTPase superfamily. EngA (Der) GTPase family. As to quaternary structure, associates with the 50S ribosomal subunit.

GTPase that plays an essential role in the late steps of ribosome biogenesis. This chain is GTPase Der, found in Mesoplasma florum (strain ATCC 33453 / NBRC 100688 / NCTC 11704 / L1) (Acholeplasma florum).